The following is a 112-amino-acid chain: CENP-A recruiting complex protein mis19 (112 aa).

Component of the CENP-A recruiting complex composed of at least mis16, mis19, mis19 and mis20.

It localises to the chromosome. Its subcellular location is the centromere. The protein resides in the kinetochore. Functionally, component of the CENP-A recruiting complex that ensures the integrity of mitotic spindles through maintenance of kinetochore factors mis6/CENP-I and cnp1/CENP-A. Links mis16 and mis18 to recruit CENP-A through interacting with non-sense-mediated mRNA decay (NMD) factors and the SWI/SNF complex. Also links mis18 with the CCAN/mis6/ctf19 complex to promote CENP-A assembly. The polypeptide is CENP-A recruiting complex protein mis19 (Schizosaccharomyces pombe (strain 972 / ATCC 24843) (Fission yeast)).